Reading from the N-terminus, the 834-residue chain is Transcription intermediary factor 1-beta (834 aa).

Ala2 is modified (N-acetylalanine). Positions 13 to 23 (AATAASAASGS) are enriched in low complexity. A disordered region spans residues 13–56 (AATAASAASGSPGSGEGSAGGEKRPAASSAAAASAAASSPAGGG). 3 positions are modified to phosphoserine: Ser23, Ser26, and Ser30. Lys35 participates in a covalent cross-link: Glycyl lysine isopeptide (Lys-Gly) (interchain with G-Cter in SUMO2). A compositionally biased stretch (low complexity) spans 38 to 52 (AASSAAAASAAASSP). Position 51 is a phosphoserine (Ser51). An RING-type zinc finger spans residues 66-122 (CGVCRERLRPERDPRLLPCLHSACSACLGPATPAAANNSGDGGSAGDGAMVDCPVCK). Lys128 is covalently cross-linked (Glycyl lysine isopeptide (Lys-Gly) (interchain with G-Cter in SUMO2)). Residue Ser139 is modified to Phosphoserine. The B box-type 1 zinc finger occupies 149–196 (DANQCCTSCEDNAPATSYCVECSEPLCETCVEAHQRVKYTKDHTVRST). Zn(2+) is bound by residues Cys154, Cys157, Cys178, and His182. Residue Lys200 forms a Glycyl lysine isopeptide (Lys-Gly) (interchain with G-Cter in SUMO2) linkage. A B box-type 2 zinc finger spans residues 205–246 (ERTVYCNVHKHEPLVLFCESCDTLTCRDCQLNAHKDHQYQFL). Residues Cys210, His213, Cys233, and His238 each coordinate Zn(2+). Residues 247–377 (EDAVRNQRKL…LIYFQLHRAL (131 aa)) form a leucine zipper alpha helical coiled-coil region region. The interval 248 to 377 (DAVRNQRKLL…LIYFQLHRAL (130 aa)) is interaction with MAGEC2. Residues Lys255 and Lys262 each participate in a glycyl lysine isopeptide (Lys-Gly) (interchain with G-Cter in SUMO2) cross-link. An N6-acetyllysine modification is found at Lys267. Residue Lys273 forms a Glycyl lysine isopeptide (Lys-Gly) (interchain with G-Cter in SUMO2) linkage. An N6-acetyllysine; alternate modification is found at Lys305. Residue Lys305 forms a Glycyl lysine isopeptide (Lys-Gly) (interchain with G-Cter in SUMO2); alternate linkage. Residue Lys320 forms a Glycyl lysine isopeptide (Lys-Gly) (interchain with G-Cter in SUMO2) linkage. Lys341 carries the post-translational modification N6-acetyllysine. Lys367 is covalently cross-linked (Glycyl lysine isopeptide (Lys-Gly) (interchain with G-Cter in SUMO2)). Positions 367-371 (KLIYF) are involved in binding PPP1CA. Position 378 is an N6-acetyllysine; alternate (Lys378). A Glycyl lysine isopeptide (Lys-Gly) (interchain with G-Cter in SUMO2); alternate cross-link involves residue Lys378. A Glycyl lysine isopeptide (Lys-Gly) (interchain with G-Cter in SUMO1); alternate cross-link involves residue Lys378. Lys408 is covalently cross-linked (Glycyl lysine isopeptide (Lys-Gly) (interchain with G-Cter in SUMO2)). Positions 412–480 (ERPGTNSTGP…SRSGEGEVSG (69 aa)) are disordered. Ser418 is modified (phosphoserine). Residue Lys435 forms a Glycyl lysine isopeptide (Lys-Gly) (interchain with G-Cter in SUMO2) linkage. The span at 435–444 (KQGSGSSQPM) shows a compositional bias: polar residues. Residues Ser438, Ser440, and Ser454 each carry the phosphoserine modification. Lys469 participates in a covalent cross-link: Glycyl lysine isopeptide (Lys-Gly) (interchain with G-Cter in SUMO2); alternate. A Glycyl lysine isopeptide (Lys-Gly) (interchain with G-Cter in SUMO1); alternate cross-link involves residue Lys469. Arg470 is subject to Citrulline. A Phosphoserine modification is found at Ser471. Arg472 is modified (citrulline). Phosphoserine is present on residues Ser473, Ser479, and Ser489. An HP1 box region spans residues 476–513 (GEVSGLLRKVPRVSLERLDLDLTSDSQPPVFKVFPGST). A PxVxL motif motif is present at residues 481 to 494 (LLRKVPRVSLERLD). A Phosphothreonine modification is found at Thr498. A Phosphoserine modification is found at Ser501. Lys507 is covalently cross-linked (Glycyl lysine isopeptide (Lys-Gly) (interchain with G-Cter in SUMO2)). A Glycyl lysine isopeptide (Lys-Gly) (interchain with G-Cter in SUMO2); alternate cross-link involves residue Lys554. Residue Lys554 forms a Glycyl lysine isopeptide (Lys-Gly) (interchain with G-Cter in SUMO); alternate linkage. A Glycyl lysine isopeptide (Lys-Gly) (interchain with G-Cter in SUMO2) cross-link involves residue Lys575. Positions 581 to 602 (LTEGPGAEGPRLASPSGSTSSG) are disordered. Ser594 carries the post-translational modification Phosphoserine. Residues 625–672 (ATICRVCQKPGDLVMCNQCEFCFHLDCHLPALQDVPGEEWSCSLCHVL) form a PHD-type zinc finger. Lys676 is covalently cross-linked (Glycyl lysine isopeptide (Lys-Gly) (interchain with G-Cter in SUMO)). 3 positions are modified to phosphoserine: Ser683, Ser689, and Ser697. The Bromo domain maps to 695–799 (KLSPANQRKC…RFFETRMNDA (105 aa)). Residue Lys750 forms a Glycyl lysine isopeptide (Lys-Gly) (interchain with G-Cter in SUMO2); alternate linkage. Lys750 participates in a covalent cross-link: Glycyl lysine isopeptide (Lys-Gly) (interchain with G-Cter in SUMO1); alternate. Lys750 is covalently cross-linked (Glycyl lysine isopeptide (Lys-Gly) (interchain with G-Cter in SUMO); alternate). Ser752 is modified (phosphoserine). A Phosphotyrosine modification is found at Tyr755. A Phosphoserine modification is found at Ser757. An N6-acetyllysine; alternate mark is found at Lys770, Lys774, and Lys779. Residues Lys770, Lys774, and Lys779 each participate in a glycyl lysine isopeptide (Lys-Gly) (interchain with G-Cter in SUMO2); alternate cross-link. A Glycyl lysine isopeptide (Lys-Gly) (interchain with G-Cter in SUMO1); alternate cross-link involves residue Lys779. Phosphoserine is present on Ser784. A Glycyl lysine isopeptide (Lys-Gly) (interchain with G-Cter in SUMO2) cross-link involves residue Lys804. Residue Ser824 is modified to Phosphoserine; by ATM and ATR and dsDNA kinase.

Belongs to the TRIM/RBCC family. As to quaternary structure, oligomer; the RBCC domain homotrimerizes and interacts with one molecule of KRAB to form the KRAB-KAP1 corepressor complex. Interacts with SETX. Binding to a KRAB domain is an absolute requirement for silencing gene expression. Interacts with a number of KRAB-ZFP proteins including ZNF10, ZFP53, ZFP68, ZNF382 and ZNF256. Interacts with NCOR1, NR3C1 and CHD3. Interacts with CEBPB (via the RING-type and PHD-type zinc fingers). Interacts with CBX5 (via the PxVxL motif); the interaction occurs in interphase nuclei and competes for binding POGZ. Interacts with POGZ; the interaction competes for interaction with CBX5. Interacts with SETDB1; the interaction is enhanced by KAP1 sumoylation, stimulates SETDB1 histone methyltransferase activity and gene silencing. Interacts (via the PHD-type zinc finger) with UBE2I; the interaction is required for sumoylation and repressor activity. Component of the TRIM28/KAP1-ERBB4-MDM2 complex involved in connecting growth factor and DNA damage responses. Interacts directly with ERBB4; the interaction represses ERBB4-mediated transcription activity. Interacts with MDM2; the interaction contributes to p53/TP53 inactivation. Component of the TRIM28/KAP1-MDM2-p53/TP53; involved in regulating p53/TP53 stabilization and activity. Interacts (via the leucine zipper alpha helical coiled-coil) with E2F1 (central region); the interaction inhibits E2F1 acetylation and transcriptional activity. Interacts with PPP1CA; the interaction dephosphorylates TRIM28 at Ser-824 and forms a complex at the p21 promoter site. Interacts with PPP1CB; the interaction is weak but is increased on dephosphorylation at Ser-824. Interacts with CEBPB and NR3C1. Interacts with CBX5 (via the PxVxL motif); the interaction occurs in interphase nuclei and competes for binding POGZ. Component of a ternary complex that includes TRIM28, a HP1 protein (CBX1, CBX3 OR CBX5), a KRAB domain-containing protein, and DNA. Interacts with SMARCAD1. Interacts with, and sumoylates IRF7. Interacts with MAGEC2. Part of a complex composed of TRIM28, HDAC1, HDAC2 and EHMT2. Interacts (via the RBCC domain) with KOX1 (via the KRAB domain), ZNF268 (via the KRAB domain) and ZNF300 (via the KRAB domain); the interactions increase KOX1, ZNF268 and ZNF300 nuclear localization activities. Interacts with AICDA. The large PER complex involved in the histone methylation is composed of at least PER2, CBX3, TRIM28, SUV39H1 and/or SUV39H2; CBX3 mediates the formation of the complex. Interacts with NR4A3; the interactions potentiates NR4A3 activity on NurRE promoter. Interacts (unphosphorylated or phosphorylated form) with ZBTB1 (via BTB domain). Probably part of a corepressor complex containing ZNF304, TRIM28, SETDB1 and DNMT1. Interacts with ATRX. Forms a complex with ATRX, SETDB1 and ZNF274. Interacts with ZFP568; the interaction mediates ZFP568 transcriptional repression activity. Interacts with RRP1B. Interacts with CRY1. Interacts with ZNF263; recruited to the SIX3 promoter along with other proteins involved in chromatin modification and transcriptional corepression where it contributes to transcriptional repression. Interacts with CYREN (via XLF motif). Interacts with TRIM17; this interaction prevents TRIM28 activity. Interacts with ZNF746. Interacts with PHF13. Interacts with ZNF354C. Interacts with ZNF432; the interaction is independent of PARP1. Post-translationally, ATM-induced phosphorylation on Ser-824 represses sumoylation leading to the de-repression of expression of a subset of genes involved in cell cycle control and apoptosis in response to genotoxic stress. Dephosphorylation by the phosphatases, PPP1CA and PP1CB forms, allows sumoylation and expression of TRIM28 target genes. Sumoylation/desumoylation events regulate TRIM28-mediated transcriptional repression. Sumoylation is required for interaction with CHD3 and SETDB1 and the corepressor activity. Represses and is repressed by Ser-824 phosphorylation. Enhances the TRIM28 corepressor activity, inhibiting transcriptional activity of a number of genes including GADD45A and CDKN1A/p21. Lys-554, Lys-779 and Lys-804 are the major sites of sumoylation. In response to Dox-induced DNA damage, enhanced phosphorylation on Ser-824 prevents sumoylation and allows de-repression of CDKN1A/p21. In terms of processing, auto-ubiquitinated; enhanced by MAGEA2 and MAGEC2. Post-translationally, citrullinated by PADI4. ADP-ribosylated by SIRT6, promoting TRIM28/KAP1 interaction with CBX5, thereby contributing to the packaging of LINE-1 retrotransposon elements into transcriptionally repressive heterochromatin.

Its subcellular location is the nucleus. The enzyme catalyses S-ubiquitinyl-[E2 ubiquitin-conjugating enzyme]-L-cysteine + [acceptor protein]-L-lysine = [E2 ubiquitin-conjugating enzyme]-L-cysteine + N(6)-ubiquitinyl-[acceptor protein]-L-lysine.. It participates in protein modification; protein sumoylation. In terms of biological role, nuclear corepressor for KRAB domain-containing zinc finger proteins (KRAB-ZFPs). Mediates gene silencing by recruiting CHD3, a subunit of the nucleosome remodeling and deacetylation (NuRD) complex, and SETDB1 (which specifically methylates histone H3 at 'Lys-9' (H3K9me)) to the promoter regions of KRAB target genes. Enhances transcriptional repression by coordinating the increase in H3K9me, the decrease in histone H3 'Lys-9 and 'Lys-14' acetylation (H3K9ac and H3K14ac, respectively) and the disposition of HP1 proteins to silence gene expression. Recruitment of SETDB1 induces heterochromatinization. May play a role as a coactivator for CEBPB and NR3C1 in the transcriptional activation of ORM1. Also a corepressor for ERBB4. Inhibits E2F1 activity by stimulating E2F1-HDAC1 complex formation and inhibiting E2F1 acetylation. May serve as a partial backup to prevent E2F1-mediated apoptosis in the absence of RB1. Important regulator of CDKN1A/p21(CIP1). Has E3 SUMO-protein ligase activity toward itself via its PHD-type zinc finger. Specifically sumoylates IRF7, thereby inhibiting its transactivation activity. Ubiquitinates p53/TP53 leading to its proteasomal degradation; the function is enhanced by MAGEC2 and MAGEA2, and possibly MAGEA3 and MAGEA6. Mediates the nuclear localization of KOX1, ZNF268 and ZNF300 transcription factors. Probably forms a corepressor complex required for activated KRAS-mediated promoter hypermethylation and transcriptional silencing of tumor suppressor genes (TSGs) or other tumor-related genes in colorectal cancer (CRC) cells. Required to maintain a transcriptionally repressive state of genes in undifferentiated embryonic stem cells (ESCs). In ESCs, in collaboration with SETDB1, is also required for H3K9me3 and silencing of endogenous and introduced retroviruses in a DNA-methylation independent-pathway. Associates at promoter regions of tumor suppressor genes (TSGs) leading to their gene silencing. The SETDB1-TRIM28-ZNF274 complex may play a role in recruiting ATRX to the 3'-exons of zinc-finger coding genes with atypical chromatin signatures to establish or maintain/protect H3K9me3 at these transcriptionally active regions. Acts as a corepressor for ZFP568. The chain is Transcription intermediary factor 1-beta from Mus musculus (Mouse).